The following is a 513-amino-acid chain: NAD(P)H-quinone oxidoreductase subunit 2 (513 aa).

The next 14 helical transmembrane spans lie at threonine 12–isoleucine 32, leucine 41–isoleucine 61, leucine 77–valine 97, serine 104–leucine 124, methionine 130–tyrosine 150, leucine 165–phenylalanine 185, isoleucine 199–phenylalanine 219, proline 238–isoleucine 258, tryptophan 272–isoleucine 292, methionine 300–threonine 320, isoleucine 328–phenylalanine 348, leucine 372–glycine 392, leucine 394–valine 414, and alanine 456–isoleucine 476. A compositionally biased stretch (polar residues) spans threonine 494–alanine 505. A disordered region spans residues threonine 494–arginine 513.

It belongs to the complex I subunit 2 family. NDH-1 can be composed of about 15 different subunits; different subcomplexes with different compositions have been identified which probably have different functions.

It localises to the cell inner membrane. The catalysed reaction is a plastoquinone + NADH + (n+1) H(+)(in) = a plastoquinol + NAD(+) + n H(+)(out). It catalyses the reaction a plastoquinone + NADPH + (n+1) H(+)(in) = a plastoquinol + NADP(+) + n H(+)(out). In terms of biological role, NDH-1 shuttles electrons from an unknown electron donor, via FMN and iron-sulfur (Fe-S) centers, to quinones in the respiratory and/or the photosynthetic chain. The immediate electron acceptor for the enzyme in this species is believed to be plastoquinone. Couples the redox reaction to proton translocation, and thus conserves the redox energy in a proton gradient. Cyanobacterial NDH-1 also plays a role in inorganic carbon-concentration. This chain is NAD(P)H-quinone oxidoreductase subunit 2, found in Gloeobacter violaceus (strain ATCC 29082 / PCC 7421).